The chain runs to 213 residues: Oxidase ustYa (213 aa).

Residues 1–26 (MAERSSNGYKEVPVRQSEESTIAEEE) are disordered. A helical membrane pass occupies residues 48–68 (AVWFLIALLLLSNIGLLGGLI). A glycan (N-linked (GlcNAc...) asparagine) is linked at asparagine 98. 2 short sequence motifs (HXXHC) span residues 123–127 (HQLHC) and 150–154 (HLMHC).

It belongs to the ustYa family.

It localises to the membrane. It participates in mycotoxin biosynthesis. Oxidase; part of the gene cluster that mediates the biosynthesis of the secondary metabolite ustiloxin B, an antimitotic tetrapeptide. First, ustA is processed by the subtilisin-like endoprotease Kex2 that is outside the ustiloxin B gene cluster, at the C-terminal side of Arg-Lys, after transfer to Golgi apparatus through the endoplasmic reticulum (ER). Cleavage by KEX2 generates 16 peptides YAIG-I to YAIG-XVI. To process the precursor peptide further, at least two peptidases are necessary to cleave the N-terminal and C-terminal sides of the Tyr-Ala-Ile-Gly core peptide which serves as backbone for the synthesis of ustiloxin B, through cyclization and modification of the tyrosine with a non-protein coding amino acid, norvaline. One of the two peptidases must be the serine peptidase ustP; and the other pepdidase is probably ustH. Macrocyclization of the core peptide derived from ustA requires the tyrosinase ustQ, as well as the homologous oxidases ustYa and ustYb, and leads to the production of the first cyclization product N-desmethylustiloxin F. For the formation of N-desmethylustiloxin F, three oxidation steps are required, hydroxylation at the benzylic position, hydroxylation at either the aromatic ring of Tyr or beta-position of Ile, and oxidative cyclization. UstQ may catalyze the oxidation of a phenol moiety, whereas the ustYa and ustYb are most likely responsible for the remaining two-step oxidations. N-desmethylustiloxin F is then methylated by ustM to yield ustiloxin F which in turn substrate of the cytochrome P450 monooxygenase ustC which catalyzes the formation of S-deoxyustiloxin H. The flavoprotein monooxygenases ustF1 and ustF2 then participate in the modification of the side chain of S-deoxyustiloxin H, leading to the synthesis of an oxime intermediate, via ustiloxin H. Finally, carboxylative dehydration performed by the cysteine desulfurase-like protein ustD yields ustiloxin B. The sequence is that of Oxidase ustYa from Aspergillus flavus (strain ATCC 200026 / FGSC A1120 / IAM 13836 / NRRL 3357 / JCM 12722 / SRRC 167).